The chain runs to 131 residues: Heat shock protein 15 homolog (131 aa).

The S4 RNA-binding domain occupies 6 to 67 (VRLDKWLWAA…NEEKEIKIIA (62 aa)). Residues 98–131 (ARKNNSLSMPHPDRRPNKKERRDLLKFKHQDKFE) are disordered. Over residues 108–131 (HPDRRPNKKERRDLLKFKHQDKFE) the composition is skewed to basic and acidic residues.

Belongs to the HSP15 family.

Involved in the recycling of free 50S ribosomal subunits that still carry a nascent chain. Binds RNA more specifically than DNA. Binds with very high affinity to the free 50S ribosomal subunit. Does not bind it when it is part of the 70S ribosome. This Haemophilus influenzae (strain ATCC 51907 / DSM 11121 / KW20 / Rd) protein is Heat shock protein 15 homolog (hslR).